An 831-amino-acid chain; its full sequence is MGKTQKKNSKGRLDRYYYLAKEKGYRARSSFKIIQINEKYGHFLEKSKVVIDLCAAPGSWCQVASQLCPINSLIIGVDIVPIKALPNCITFQSDITTEDCRSQLRGHMKTWKADTVLHDGAPNVGLGWVQDAFTQSHLTLQALKLAVENLNTGGTFVTKIFRSRDYNNLMWVFQQLFEKVEATKPPASRNVSAEIFVVCKGYKSPKKMDPRLLDPREVFEELPTGPDNNEAKIFNPEKKVRRRQGYEEGDYTLFHEMPLLEFIKNEDPINTLGTLNKLSEPPQDDHEWKILKKSKLCTPELLECIKDLKVLGRKDFKHLLKFRKQARDLLGLDAKEETQEIEVEPLTEDQQIEKELQELTEKQKQKARKAKKQSNEIKQKEIQRSQMNMLTDMNIGIEAAQIGAESLFNLKTAIKTGQLEKLSKGKKKMIFNDEEIMKDNDINFDEEADANSEDEIDELEAQLDDMYNSYQNRRAERDANYRAKKLRGDVDDEGWEGIESDKEGSDKETEANDYEMESESDSDDDEHIQRIADQRKKELSKNAKVFFASNSIFGELGDEALLEEMNKKEAKTNQVTNENAVGHANDISNKPEQMEVDSSDSENDVSDDSDFEIVPNAPDEELSDSDSDNENDVSRKYSKAKDQQSKVDIATVEAMTLAHQVALGHKNKHDLVNEGIHKYSFRDHDDLPEWFVDDEKRNSKIVKPITKEAALAIKEKQKQLNARPIKKVLEAQGRKKLRALKRLEKLKKKSDMINEDSAKSERDKADEIQKLMKKLTKKQKTKPKATLVVARGSNRGLSGRPKGVKGKYKMVDGVMKNEQRALKRIAKKHKK.

Positions 58, 60, 78, 94, and 119 each coordinate S-adenosyl-L-methionine. Lys-159 acts as the Proton acceptor in catalysis. Coiled coils occupy residues 346-389 (LTED…QMNM) and 440-479 (NDINFDEEADANSEDEIDELEAQLDDMYNSYQNRRAERDA). 2 disordered regions span residues 492-535 (DEGW…ADQR) and 565-645 (MNKK…DQQS). Basic and acidic residues predominate over residues 499-510 (ESDKEGSDKETE). 3 stretches are compositionally biased toward acidic residues: residues 511-526 (ANDYEMESESDSDDDE), 594-611 (MEVDSSDSENDVSDDSDF), and 618-631 (PDEELSDSDSDNEN). The span at 632–645 (DVSRKYSKAKDQQS) shows a compositional bias: basic and acidic residues. Positions 729–782 (LEAQGRKKLRALKRLEKLKKKSDMINEDSAKSERDKADEIQKLMKKLTKKQKTK) form a coiled coil.

It belongs to the class I-like SAM-binding methyltransferase superfamily. RNA methyltransferase RlmE family. SPB1 subfamily. As to quaternary structure, component of the nucleolar and nucleoplasmic pre-60S ribosomal particle.

The protein localises to the nucleus. The protein resides in the nucleolus. The enzyme catalyses a ribonucleotide in rRNA + S-adenosyl-L-methionine = a 2'-O-methylribonucleotide in rRNA + S-adenosyl-L-homocysteine + H(+). Functionally, required for proper assembly of pre-ribosomal particles during the biogenesis of the 60S ribosomal subunit. This chain is AdoMet-dependent rRNA methyltransferase SPB1, found in Debaryomyces hansenii (strain ATCC 36239 / CBS 767 / BCRC 21394 / JCM 1990 / NBRC 0083 / IGC 2968) (Yeast).